The primary structure comprises 300 residues: Inosose dehydratase (300 aa).

This sequence belongs to the IolE/MocC family. Requires glutathione as cofactor. Co(2+) serves as cofactor. It depends on Mn(2+) as a cofactor.

The catalysed reaction is scyllo-inosose = 3D-3,5/4-trihydroxycyclohexane-1,2-dione + H2O. It functions in the pathway polyol metabolism; myo-inositol degradation into acetyl-CoA; acetyl-CoA from myo-inositol: step 2/7. In terms of biological role, catalyzes the dehydration of inosose (2-keto-myo-inositol, 2KMI or 2,4,6/3,5-pentahydroxycyclohexanone) to 3D-(3,5/4)-trihydroxycyclohexane-1,2-dione (D-2,3-diketo-4-deoxy-epi-inositol). The sequence is that of Inosose dehydratase from Lactiplantibacillus plantarum (strain ATCC BAA-793 / NCIMB 8826 / WCFS1) (Lactobacillus plantarum).